The following is a 507-amino-acid chain: 2,3-bisphosphoglycerate-independent phosphoglycerate mutase (507 aa).

Positions 11 and 61 each coordinate Mn(2+). S61 serves as the catalytic Phosphoserine intermediate. Substrate-binding positions include H122, 152 to 153 (RD), R183, R189, 258 to 261 (RNDR), and K332. Mn(2+) is bound by residues D399, H403, D440, H441, and H458.

The protein belongs to the BPG-independent phosphoglycerate mutase family. Monomer. It depends on Mn(2+) as a cofactor.

The enzyme catalyses (2R)-2-phosphoglycerate = (2R)-3-phosphoglycerate. It participates in carbohydrate degradation; glycolysis; pyruvate from D-glyceraldehyde 3-phosphate: step 3/5. Catalyzes the interconversion of 2-phosphoglycerate and 3-phosphoglycerate. The sequence is that of 2,3-bisphosphoglycerate-independent phosphoglycerate mutase from Parabacteroides distasonis (strain ATCC 8503 / DSM 20701 / CIP 104284 / JCM 5825 / NCTC 11152).